The following is a 100-amino-acid chain: Protein MEN-8 (100 aa).

The first 33 residues, 1-33 (MANNMKSATFCKATWAIFLVALAILVQLKGSEA), serve as a signal peptide directing secretion. 4 disulfides stabilise this stretch: Cys-38–Cys-76, Cys-48–Cys-65, Cys-66–Cys-91, and Cys-78–Cys-98.

This sequence belongs to the A9/FIL1 family.

It is found in the secreted. This Silene latifolia (White campion) protein is Protein MEN-8 (MEN-8).